Here is a 525-residue protein sequence, read N- to C-terminus: MNDTNDVMHVHSESISPKKNDLDIELGESVVEPHLSNNSIAKLDTYELEENEDISDYAYKLAGISNEHPAHPQNWGWWKKAYIVLLSTSLQMYVFWTPNFYPGVQDSVMELWHLSSQVSLLGQSMFVLGVALGPLFLGPLSDLLGRKLVYIGSLIIYVCFCISCALARNYAQLVISMLIMGVVGSTALGNVAGAVADVLGDEDSNWGMYMFIFMCSVASVGSPMGTGVAENPKLTWRWLYWIDVIVGGFFIILFVFTPETLPAIVIQRYEQKRQGLPVSWFPQFSLKKLAKDTYFVFFMAIKIFFSEPIVSSLGIYNGFVNGLLYFFLQAIWPVYFSIYKMSDMAASCTYMAAMPACVILLWFEPLQCWLYKRDKRKHQNRLRPEARFIMTLFYVWGFPIGIFMFAFCSKVHIHYIVSLIGLTIFNIADYHIWQAMLLYVTDAYPNVSASAVAAFELPSNLGAVGFIHLSALMFSRMNVHWATAVVGFASLPLIALIYALYFYGDRIRARSKLASQRVPINTAAH.

Position 55 is a phosphoserine (Ser55). 13 consecutive transmembrane segments (helical) span residues 81-101, 120-140, 147-167, 173-193, 208-228, 238-258, 295-315, 318-338, 350-370, 388-408, 413-433, 454-474, and 484-504; these read AYIV…PNFY, LLGQ…LGPL, KLVY…CALA, LVIS…NVAG, MYMF…GTGV, WLYW…VFTP, FVFF…SLGI, GFVN…YFSI, YMAA…QCWL, FIMT…FAFC, IHYI…YHIW, AFEL…ALMF, and AVVG…YFYG.

Belongs to the major facilitator superfamily. CAR1 family.

The protein resides in the membrane. This is an uncharacterized protein from Schizosaccharomyces pombe (strain 972 / ATCC 24843) (Fission yeast).